We begin with the raw amino-acid sequence, 210 residues long: Ribosomal RNA large subunit methyltransferase E (210 aa).

S-adenosyl-L-methionine is bound by residues glycine 55, tryptophan 57, aspartate 75, aspartate 93, and aspartate 117. The active-site Proton acceptor is the lysine 157. The disordered stretch occupies residues 175-210 (YRQVKTTKPPSSRKKSSEMYVVGLDFKPKKNKKSKD).

This sequence belongs to the class I-like SAM-binding methyltransferase superfamily. RNA methyltransferase RlmE family.

The protein localises to the cytoplasm. The enzyme catalyses uridine(2552) in 23S rRNA + S-adenosyl-L-methionine = 2'-O-methyluridine(2552) in 23S rRNA + S-adenosyl-L-homocysteine + H(+). Specifically methylates the uridine in position 2552 of 23S rRNA at the 2'-O position of the ribose in the fully assembled 50S ribosomal subunit. The chain is Ribosomal RNA large subunit methyltransferase E from Methanobrevibacter smithii (strain ATCC 35061 / DSM 861 / OCM 144 / PS).